The chain runs to 951 residues: Valine--tRNA ligase (951 aa).

Positions 42-52 (PNVTGSLHMGH) match the 'HIGH' region motif. The short motif at 554 to 558 (KMSKS) is the 'KMSKS' region element. Lys557 lines the ATP pocket. The stretch at 880–944 (AGLINKEDEL…AEAKAKLIEQ (65 aa)) forms a coiled coil.

It belongs to the class-I aminoacyl-tRNA synthetase family. ValS type 1 subfamily. In terms of assembly, monomer.

The protein localises to the cytoplasm. It carries out the reaction tRNA(Val) + L-valine + ATP = L-valyl-tRNA(Val) + AMP + diphosphate. Functionally, catalyzes the attachment of valine to tRNA(Val). As ValRS can inadvertently accommodate and process structurally similar amino acids such as threonine, to avoid such errors, it has a 'posttransfer' editing activity that hydrolyzes mischarged Thr-tRNA(Val) in a tRNA-dependent manner. This Shigella flexneri protein is Valine--tRNA ligase.